A 192-amino-acid polypeptide reads, in one-letter code: Adenylate kinase (192 aa).

ATP is bound at residue 12-17; that stretch reads GSGKTT. The NMP stretch occupies residues 34-63; the sequence is STGDLLRAEVASGSELGQTIKSYIDNGNLV. AMP contacts are provided by residues T35, R40, 61–63, 88–91, and Q95; these read NLV and GFPR. Residues 130–136 form an LID region; that stretch reads GRARGAD. An ATP-binding site is contributed by R131. Residues R133 and R145 each contribute to the AMP site. R173 contributes to the ATP binding site.

This sequence belongs to the adenylate kinase family. In terms of assembly, monomer.

It localises to the cytoplasm. The enzyme catalyses AMP + ATP = 2 ADP. Its pathway is purine metabolism; AMP biosynthesis via salvage pathway; AMP from ADP: step 1/1. Its function is as follows. Catalyzes the reversible transfer of the terminal phosphate group between ATP and AMP. Plays an important role in cellular energy homeostasis and in adenine nucleotide metabolism. The sequence is that of Adenylate kinase from Nautilia profundicola (strain ATCC BAA-1463 / DSM 18972 / AmH).